Consider the following 279-residue polypeptide: Biotin synthase (279 aa).

One can recognise a Radical SAM core domain in the interval 2-228 (KTIMLCAISS…NARIMIAGGR (227 aa)). The [4Fe-4S] cluster site is built by Cys-17, Cys-21, and Cys-24. [2Fe-2S] cluster-binding residues include Cys-61, Cys-96, Cys-154, and Arg-221.

It belongs to the radical SAM superfamily. Biotin synthase family. In terms of assembly, homodimer. The cofactor is [4Fe-4S] cluster. [2Fe-2S] cluster serves as cofactor.

The catalysed reaction is (4R,5S)-dethiobiotin + (sulfur carrier)-SH + 2 reduced [2Fe-2S]-[ferredoxin] + 2 S-adenosyl-L-methionine = (sulfur carrier)-H + biotin + 2 5'-deoxyadenosine + 2 L-methionine + 2 oxidized [2Fe-2S]-[ferredoxin]. Its pathway is cofactor biosynthesis; biotin biosynthesis; biotin from 7,8-diaminononanoate: step 2/2. In terms of biological role, catalyzes the conversion of dethiobiotin (DTB) to biotin by the insertion of a sulfur atom into dethiobiotin via a radical-based mechanism. This Campylobacter curvus (strain 525.92) protein is Biotin synthase.